Here is a 266-residue protein sequence, read N- to C-terminus: Type 1 encapsulin shell protein (266 aa).

It belongs to the encapsulin family. Family 1 subfamily. In terms of assembly, homomultimeric. This encapsulin nanocompartment is formed by 60 subunits, and encloses one Dyp homohexamer; partially assembled 58-subunit compartments with and without cargo are also purified. May assemble the shell from dimers. Monomers form pentamers, which assemble to form hollow shells with pores 5-8 Angstroms in diameter where 3 pentamers meet.

It is found in the encapsulin nanocompartment. In terms of biological role, shell component of a type 1 encapsulin nanocompartment. Assembles into proteinaceous shells 23-24 nm in diameter with 2-2.5 nm thick walls. Endogenous cargo protein DyP (dye-decolorizing peroxidase) is targeted to the interior via its C-terminal extension; only 1 DyP hexamer is incorporated into each shell. Empty shells can be isolated in the absence of cargo. Cargo encapsulation probably precedes assembly of the nanocompartment; may assemble or disassemble via dimers, subcomplexes with a distinct preference for even numbers of subunits are detected. Nanocompartments are stable against mechanical forces; loaded nanocompartments are less stable than empty ones. Nanocompartments are stable between pH 5-10; they aggregate at pH 9-10 and start to disassemble at pH 11. They are stable in 1M NaCl, 1 M MgCl(2) and 1M CaCl(2), unstable in 20% DMSO (dimethylsulfoxide) and are stable in 20% but not 40% ethanol. The chain is Type 1 encapsulin shell protein from Brevibacterium linens.